A 326-amino-acid chain; its full sequence is Cell surface glycoprotein CD200 receptor 1 (326 aa).

An N-terminal signal peptide occupies residues 1–25 (MFCFWRTSALAVLLIWGVFVAGSSC). Residues 26–238 (TDKNQTTQNN…SRGGNQSLRP (213 aa)) lie on the Extracellular side of the membrane. 11 N-linked (GlcNAc...) asparagine glycosylation sites follow: Asn-29, Asn-34, Asn-35, Asn-44, Asn-93, Asn-101, Asn-159, Asn-192, Asn-207, Asn-221, and Asn-233. The region spanning 51-136 (IGTKALLCCF…YTCETVTPEG (86 aa)) is the Ig-like V-type domain. Cystine bridges form between Cys-58/Cys-129 and Cys-82/Cys-97. An Ig-like C2-type domain is found at 138–229 (FEKNYDLQVL…GNQSLSIELS (92 aa)). Disulfide bonds link Cys-164-Cys-213 and Cys-183-Cys-201. A helical transmembrane segment spans residues 239-259 (YIPYIIPSIIILIIIGCICLL). Topologically, residues 260 to 326 (KISGFRKCKL…DCLTLSAIGI (67 aa)) are cytoplasmic.

It belongs to the CD200R family. As to quaternary structure, CD200 and CD200R1 interact via their respective N-terminal Ig-like domains. As to expression, expressed in granulocytes, monocytes, most T-cells and a subset of NK, NKT and B-cells (at protein level). Expressed in the spleen, lung, liver, testis, bone marrow, lymph nodes, spinal cord, kidney, uterus and small intestine. Expressed in mast and dendritic cells. Expressed in the lung of N.brasiliensis-infected mice.

The protein resides in the cell membrane. Its function is as follows. Inhibitory receptor for the CD200/OX2 cell surface glycoprotein. Limits inflammation by inhibiting the expression of pro-inflammatory molecules including TNF-alpha, interferons, and inducible nitric oxide synthase (iNOS) in response to selected stimuli. This is Cell surface glycoprotein CD200 receptor 1 (Cd200r1) from Mus musculus (Mouse).